A 318-amino-acid chain; its full sequence is Ribose-phosphate pyrophosphokinase 1 (318 aa).

ATP contacts are provided by residues 43–45 (DGE) and 102–103 (RQ). Residues His136 and Asp176 each coordinate Mg(2+). Lys199 is an active-site residue. D-ribose 5-phosphate is bound by residues Arg201, Asp225, and 229–233 (DTAGT).

This sequence belongs to the ribose-phosphate pyrophosphokinase family. Class I subfamily. Homohexamer. The cofactor is Mg(2+).

It is found in the cytoplasm. It carries out the reaction D-ribose 5-phosphate + ATP = 5-phospho-alpha-D-ribose 1-diphosphate + AMP + H(+). It participates in metabolic intermediate biosynthesis; 5-phospho-alpha-D-ribose 1-diphosphate biosynthesis; 5-phospho-alpha-D-ribose 1-diphosphate from D-ribose 5-phosphate (route I): step 1/1. Functionally, involved in the biosynthesis of the central metabolite phospho-alpha-D-ribosyl-1-pyrophosphate (PRPP) via the transfer of pyrophosphoryl group from ATP to 1-hydroxyl of ribose-5-phosphate (Rib-5-P). In Listeria monocytogenes serotype 4b (strain F2365), this protein is Ribose-phosphate pyrophosphokinase 1.